Reading from the N-terminus, the 432-residue chain is Putative cyclin-F1-4 (432 aa).

Belongs to the cyclin family. Cyclin F subfamily.

The protein is Putative cyclin-F1-4 (CycF1-4) of Oryza sativa subsp. japonica (Rice).